The primary structure comprises 151 residues: Large ribosomal subunit protein eL8 (151 aa).

It belongs to the eukaryotic ribosomal protein eL8 family. As to quaternary structure, part of the 50S ribosomal subunit. Probably part of the RNase P complex.

The protein localises to the cytoplasm. In terms of biological role, multifunctional RNA-binding protein that recognizes the K-turn motif in ribosomal RNA, the RNA component of RNase P, box H/ACA, box C/D and box C'/D' sRNAs. The polypeptide is Large ribosomal subunit protein eL8 (Pyrobaculum neutrophilum (strain DSM 2338 / JCM 9278 / NBRC 100436 / V24Sta) (Thermoproteus neutrophilus)).